A 306-amino-acid chain; its full sequence is MINSQNTLYLQTKPYWDYLRIEKQASQHTLSNYQRQLLAVSDMLSQAGISTWQEVNSATVRWIIAQSNKQGLGAKSIALRLVALRQWFSYLIRQEKMSVNPAVGIKAPKASKRLPKNIDAEQIGQLLTSDSHEPSDLRDLAMMELMYSSGLRLSELQGLDLGDMDLAGREVRLLGKGNKERIVPIGSKALEALNRWLAVRNQFKPQDNAVFLNKRGGRLSHRSIQLVMQKWGEKQGLESHLHPHKLRHSFATHMLEASGDLRAVQELLGHSNLATTQIYTHLDFQHLAKIYDAAHPRAKRKKQDDD.

The region spanning asparagine 6–isoleucine 92 is the Core-binding (CB) domain. The Tyr recombinase domain maps to arginine 113–aspartate 292. Residues arginine 152, lysine 176, histidine 244, arginine 247, and histidine 270 contribute to the active site. Tyrosine 279 functions as the O-(3'-phospho-DNA)-tyrosine intermediate in the catalytic mechanism.

This sequence belongs to the 'phage' integrase family. XerC subfamily. In terms of assembly, forms a cyclic heterotetrameric complex composed of two molecules of XerC and two molecules of XerD.

Its subcellular location is the cytoplasm. Its function is as follows. Site-specific tyrosine recombinase, which acts by catalyzing the cutting and rejoining of the recombining DNA molecules. The XerC-XerD complex is essential to convert dimers of the bacterial chromosome into monomers to permit their segregation at cell division. It also contributes to the segregational stability of plasmids. In Actinobacillus pleuropneumoniae serotype 7 (strain AP76), this protein is Tyrosine recombinase XerC.